Reading from the N-terminus, the 399-residue chain is Succinate--CoA ligase [ADP-forming] subunit beta (399 aa).

An ATP-grasp domain is found at 9 to 254 (KAVLAEFGVA…ESEEDPKEIE (246 aa)). ATP is bound by residues Lys46, 53-55 (GRG), Glu109, Ala112, and Glu117. Mg(2+) is bound by residues Asn209 and Asp223. Residues Asn274 and 331-333 (GIM) each bind substrate.

Belongs to the succinate/malate CoA ligase beta subunit family. In terms of assembly, heterotetramer of two alpha and two beta subunits. It depends on Mg(2+) as a cofactor.

The catalysed reaction is succinate + ATP + CoA = succinyl-CoA + ADP + phosphate. It catalyses the reaction GTP + succinate + CoA = succinyl-CoA + GDP + phosphate. It functions in the pathway carbohydrate metabolism; tricarboxylic acid cycle; succinate from succinyl-CoA (ligase route): step 1/1. Functionally, succinyl-CoA synthetase functions in the citric acid cycle (TCA), coupling the hydrolysis of succinyl-CoA to the synthesis of either ATP or GTP and thus represents the only step of substrate-level phosphorylation in the TCA. The beta subunit provides nucleotide specificity of the enzyme and binds the substrate succinate, while the binding sites for coenzyme A and phosphate are found in the alpha subunit. This is Succinate--CoA ligase [ADP-forming] subunit beta from Phenylobacterium zucineum (strain HLK1).